We begin with the raw amino-acid sequence, 165 residues long: SsrA-binding protein (165 aa).

This sequence belongs to the SmpB family.

The protein resides in the cytoplasm. Functionally, required for rescue of stalled ribosomes mediated by trans-translation. Binds to transfer-messenger RNA (tmRNA), required for stable association of tmRNA with ribosomes. tmRNA and SmpB together mimic tRNA shape, replacing the anticodon stem-loop with SmpB. tmRNA is encoded by the ssrA gene; the 2 termini fold to resemble tRNA(Ala) and it encodes a 'tag peptide', a short internal open reading frame. During trans-translation Ala-aminoacylated tmRNA acts like a tRNA, entering the A-site of stalled ribosomes, displacing the stalled mRNA. The ribosome then switches to translate the ORF on the tmRNA; the nascent peptide is terminated with the 'tag peptide' encoded by the tmRNA and targeted for degradation. The ribosome is freed to recommence translation, which seems to be the essential function of trans-translation. The chain is SsrA-binding protein from Prochlorococcus marinus (strain MIT 9515).